The primary structure comprises 197 residues: Phosphoheptose isomerase (197 aa).

An SIS domain is found at 36-197; sequence MVQCLVSEGK…IDQQLFGSTE (162 aa). Residue 51-53 coordinates substrate; the sequence is NGG. His60 and Glu64 together coordinate Zn(2+). Residues Glu64, 93–94, 119–121, Ser124, and Gln174 contribute to the substrate site; these read ND and STS. Residues Gln174 and His182 each coordinate Zn(2+).

It belongs to the SIS family. GmhA subfamily. In terms of assembly, homotetramer. It depends on Zn(2+) as a cofactor.

It localises to the cytoplasm. It catalyses the reaction 2 D-sedoheptulose 7-phosphate = D-glycero-alpha-D-manno-heptose 7-phosphate + D-glycero-beta-D-manno-heptose 7-phosphate. The protein operates within carbohydrate biosynthesis; D-glycero-D-manno-heptose 7-phosphate biosynthesis; D-glycero-alpha-D-manno-heptose 7-phosphate and D-glycero-beta-D-manno-heptose 7-phosphate from sedoheptulose 7-phosphate: step 1/1. Catalyzes the isomerization of sedoheptulose 7-phosphate in D-glycero-D-manno-heptose 7-phosphate. In Chromohalobacter salexigens (strain ATCC BAA-138 / DSM 3043 / CIP 106854 / NCIMB 13768 / 1H11), this protein is Phosphoheptose isomerase.